A 107-amino-acid chain; its full sequence is Nucleoid-associated protein Pnuc_0701 (107 aa).

Belongs to the YbaB/EbfC family. As to quaternary structure, homodimer.

The protein resides in the cytoplasm. Its subcellular location is the nucleoid. Binds to DNA and alters its conformation. May be involved in regulation of gene expression, nucleoid organization and DNA protection. This Polynucleobacter asymbioticus (strain DSM 18221 / CIP 109841 / QLW-P1DMWA-1) (Polynucleobacter necessarius subsp. asymbioticus) protein is Nucleoid-associated protein Pnuc_0701.